Here is a 306-residue protein sequence, read N- to C-terminus: Agmatinase (306 aa).

H128, D151, H153, D155, D232, and D234 together coordinate Mn(2+).

The protein belongs to the arginase family. Agmatinase subfamily. Mn(2+) is required as a cofactor.

It carries out the reaction agmatine + H2O = urea + putrescine. Its pathway is amine and polyamine biosynthesis; putrescine biosynthesis via agmatine pathway; putrescine from agmatine: step 1/1. Its function is as follows. Catalyzes the formation of putrescine from agmatine. The polypeptide is Agmatinase (speB) (Proteus mirabilis).